The primary structure comprises 95 residues: Co-chaperonin GroES (95 aa).

The protein belongs to the GroES chaperonin family. In terms of assembly, heptamer of 7 subunits arranged in a ring. Interacts with the chaperonin GroEL.

The protein localises to the cytoplasm. Functionally, together with the chaperonin GroEL, plays an essential role in assisting protein folding. The GroEL-GroES system forms a nano-cage that allows encapsulation of the non-native substrate proteins and provides a physical environment optimized to promote and accelerate protein folding. GroES binds to the apical surface of the GroEL ring, thereby capping the opening of the GroEL channel. The protein is Co-chaperonin GroES of Marinobacter nauticus (strain ATCC 700491 / DSM 11845 / VT8) (Marinobacter aquaeolei).